The following is a 60-amino-acid chain: Large ribosomal subunit protein uL30 (60 aa).

Belongs to the universal ribosomal protein uL30 family. In terms of assembly, part of the 50S ribosomal subunit.

The protein is Large ribosomal subunit protein uL30 of Finegoldia magna (strain ATCC 29328 / DSM 20472 / WAL 2508) (Peptostreptococcus magnus).